The chain runs to 167 residues: Probable phospholipid hydroperoxide glutathione peroxidase (167 aa).

Residue Cys-41 is part of the active site.

This sequence belongs to the glutathione peroxidase family.

The protein resides in the cytoplasm. It catalyses the reaction a hydroperoxy polyunsaturated fatty acid + 2 glutathione = a hydroxy polyunsaturated fatty acid + glutathione disulfide + H2O. In terms of biological role, protects cells and enzymes from oxidative damage, by catalyzing the reduction of hydrogen peroxide, lipid peroxides and organic hydroperoxide, by glutathione. The polypeptide is Probable phospholipid hydroperoxide glutathione peroxidase (CSA) (Citrus sinensis (Sweet orange)).